The chain runs to 669 residues: Cysteine-rich receptor-like protein kinase 10 (669 aa).

The first 34 residues, 1–34, serve as a signal peptide directing secretion; it reads MRRNTDQESPIMSYYSSFFFLFLFSFLTSFRVSA. Topologically, residues 35 to 285 are extracellular; it reads QDPTYVYHTC…PRSGKDGNSK (251 aa). Gnk2-homologous domains lie at 38-142 and 148-252; these read TYVY…NQNI and TTGG…IYAF. N-linked (GlcNAc...) asparagine glycans are attached at residues N49, N53, N71, and N80. 2 disulfide bridges follow: C96–C105 and C108–C133. N114, N159, N185, and N196 each carry an N-linked (GlcNAc...) asparagine glycan. 2 disulfides stabilise this stretch: C209–C218 and C221–C243. Over residues 260 to 274 the composition is skewed to pro residues; sequence PPPPPPSISTPPVSA. The tract at residues 260–280 is disordered; the sequence is PPPPPPSISTPPVSAPPRSGK. A helical transmembrane segment spans residues 286 to 306; the sequence is VLVIAIVVPIIVAVLLFIAGY. Over 307 to 669 the chain is Cytoplasmic; that stretch reads CFLTRRARKS…DASITDIHPR (363 aa). In terms of domain architecture, Protein kinase spans 348-634; the sequence is FVESNKIGQG…TLPVPRQPGL (287 aa). Residues 354-362 and K376 each bind ATP; that span reads IGQGGFGEV. Y421 is subject to Phosphotyrosine. The active-site Proton acceptor is the D473. S477 carries the post-translational modification Phosphoserine. At T513 the chain carries Phosphothreonine. Y521 is modified (phosphotyrosine).

It belongs to the protein kinase superfamily. Ser/Thr protein kinase family. CRK subfamily. In terms of assembly, interacts with CRKIP1 (KAPP), CRKIP2 and CRKIP3, three kinase-associated type 2C proteins.

The protein resides in the membrane. The enzyme catalyses L-seryl-[protein] + ATP = O-phospho-L-seryl-[protein] + ADP + H(+). The catalysed reaction is L-threonyl-[protein] + ATP = O-phospho-L-threonyl-[protein] + ADP + H(+). This chain is Cysteine-rich receptor-like protein kinase 10 (CRK10), found in Arabidopsis thaliana (Mouse-ear cress).